Consider the following 542-residue polypeptide: Cytochrome P450 monooxygenase 91 (542 aa).

The first 22 residues, 1 to 22 (MLDILRFVLICGILWILRRVLL), serve as a signal peptide directing secretion. Asn-299 and Asn-392 each carry an N-linked (GlcNAc...) asparagine glycan. Cys-482 provides a ligand contact to heme.

The protein belongs to the cytochrome P450 family. Heme serves as cofactor.

Its pathway is secondary metabolite biosynthesis. Cytochrome P450 monooxygenase that is able to use dehydroabietic acid as a substrate for oxidation. This chain is Cytochrome P450 monooxygenase 91, found in Postia placenta (strain ATCC 44394 / Madison 698-R) (Brown rot fungus).